The sequence spans 403 residues: Histidine--tRNA ligase (403 aa).

This sequence belongs to the class-II aminoacyl-tRNA synthetase family. In terms of assembly, homodimer.

The protein localises to the cytoplasm. The enzyme catalyses tRNA(His) + L-histidine + ATP = L-histidyl-tRNA(His) + AMP + diphosphate + H(+). This is Histidine--tRNA ligase from Sulfurovum sp. (strain NBC37-1).